Here is a 459-residue protein sequence, read N- to C-terminus: MARVMTAQIRQYTTPIDTSVPDSKRKYIPSSGTYPRGFRVSGTHVGVKPSNTTFPDLALISSDEPCSAAAVFTTNRFQAAPVQVSKQILEAREGRGIRGVVVNAGCANAVTGKGGLEDAKSMSAKVDECNGLNSTGGQGDSSTLVMSTGVIGQRLPIQKILSGIPTGYSNLSSTHAAWLKTARAICTTDTFPKLVSQTFTLPSSPDRTYHIAGMTKGAGMIHPNMATLLGIICTDAPIAPSALQSLLTHAVSRSFNSISIDGDTSTNDTVALLANGAAGGQPISSPTSPEYTAMQSILTGFAQSLAQLVVRDGEGATKFVTVRVQNSPSHSDAKLIASTIARSPLVKTALYGKDANWGRILCAAGYTQGLSPGTLVPERTSVSFKPVDGSAELKLVVNGEPEVVDEERAAAILQDEDLEIVVDLGGGNQGEAAKGGEDALYWFCDFSHEYVTINGDYRT.

6 residues coordinate substrate: Thr-187, Lys-216, Thr-227, Glu-314, Asn-454, and Thr-459. The Nucleophile role is filled by Thr-227.

This sequence belongs to the ArgJ family. Heterodimer of an alpha and a beta chain. Post-translationally, the alpha and beta chains are autoproteolytically processed from a single precursor protein within the mitochondrion.

It localises to the mitochondrion matrix. It carries out the reaction N(2)-acetyl-L-ornithine + L-glutamate = N-acetyl-L-glutamate + L-ornithine. It catalyses the reaction L-glutamate + acetyl-CoA = N-acetyl-L-glutamate + CoA + H(+). The protein operates within amino-acid biosynthesis; L-arginine biosynthesis; L-ornithine and N-acetyl-L-glutamate from L-glutamate and N(2)-acetyl-L-ornithine (cyclic): step 1/1. It participates in amino-acid biosynthesis; L-arginine biosynthesis; N(2)-acetyl-L-ornithine from L-glutamate: step 1/4. In terms of biological role, catalyzes two activities which are involved in the cyclic version of arginine biosynthesis: the synthesis of acetylglutamate from glutamate and acetyl-CoA, and of ornithine by transacetylation between acetylornithine and glutamate. In Uncinocarpus reesii (strain UAMH 1704), this protein is Arginine biosynthesis bifunctional protein ArgJ, mitochondrial.